The following is a 351-amino-acid chain: Minor outer capsid protein P9 (351 aa).

Disordered stretches follow at residues 245–281 (GGVP…DQPE) and 288–307 (KKVD…GNVS). Positions 288–297 (KKVDASKDAP) are enriched in basic and acidic residues.

The protein belongs to the phytoreovirus minor outer capsid protein P9 family.

The protein localises to the virion. Its subcellular location is the host cytoplasm. Minor outer capsid protein. The polypeptide is Minor outer capsid protein P9 (Rice dwarf virus (RDV)).